We begin with the raw amino-acid sequence, 315 residues long: Lipoyl synthase (315 aa).

[4Fe-4S] cluster-binding residues include Cys-62, Cys-67, Cys-73, Cys-88, Cys-92, Cys-95, and Ser-302. A Radical SAM core domain is found at 73–291 (CFGHGTATFM…GELAKKLGFS (219 aa)).

Belongs to the radical SAM superfamily. Lipoyl synthase family. It depends on [4Fe-4S] cluster as a cofactor.

The protein localises to the cytoplasm. It catalyses the reaction [[Fe-S] cluster scaffold protein carrying a second [4Fe-4S](2+) cluster] + N(6)-octanoyl-L-lysyl-[protein] + 2 oxidized [2Fe-2S]-[ferredoxin] + 2 S-adenosyl-L-methionine + 4 H(+) = [[Fe-S] cluster scaffold protein] + N(6)-[(R)-dihydrolipoyl]-L-lysyl-[protein] + 4 Fe(3+) + 2 hydrogen sulfide + 2 5'-deoxyadenosine + 2 L-methionine + 2 reduced [2Fe-2S]-[ferredoxin]. The protein operates within protein modification; protein lipoylation via endogenous pathway; protein N(6)-(lipoyl)lysine from octanoyl-[acyl-carrier-protein]: step 2/2. Its function is as follows. Catalyzes the radical-mediated insertion of two sulfur atoms into the C-6 and C-8 positions of the octanoyl moiety bound to the lipoyl domains of lipoate-dependent enzymes, thereby converting the octanoylated domains into lipoylated derivatives. This is Lipoyl synthase from Coxiella burnetii (strain CbuG_Q212) (Coxiella burnetii (strain Q212)).